Reading from the N-terminus, the 174-residue chain is MKFAVVFACMVAAVAAQVRYENEFYKKNPYRYSTYRPFVSVTTPTPFLPIPISSVAPVRVVPKVSEGYGAETVKFGNEINPDGSYTYFYETNNGIAAQEQGVPRNLGGNPPAVPVVAQGSFSWTSPEGVPISVNYVADENGYQPTGNAIPTSPPVPEQIARALAYIAKNIPLKK.

The first 16 residues, 1–16 (MKFAVVFACMVAAVAA), serve as a signal peptide directing secretion. The region spanning 82–153 (DGSYTYFYET…PTGNAIPTSP (72 aa)) is the Chitin-binding type R&amp;R domain.

Component of the cuticle of the larva of Bombyx mori. The polypeptide is Larval cuticle protein LCP-22 (LCP22) (Bombyx mori (Silk moth)).